We begin with the raw amino-acid sequence, 586 residues long: Pectinesterase 1 (586 aa).

Residues 1 to 49 form the signal peptide; it reads MDSVNSFKGYGKVDEAQDLALKKKTRKRLLLLSISVVVLIAVIIAAVVA. Residues Asn-57, Asn-97, Asn-154, Asn-201, and Asn-207 are each glycosylated (N-linked (GlcNAc...) asparagine). The RRLM cleavage motif signature appears at 250 to 253; sequence RRLM. Residues 269-272 carry the RRLL cleavage motif motif; it reads RRLL. Residues Thr-355 and Gln-385 each contribute to the substrate site. Asp-408 serves as the catalytic Proton donor. The cysteines at positions 422 and 442 are disulfide-linked. Asp-429 functions as the Nucleophile in the catalytic mechanism. A glycan (N-linked (GlcNAc...) asparagine) is linked at Asn-466. Substrate contacts are provided by Arg-492 and Trp-494.

The protein in the N-terminal section; belongs to the PMEI family. This sequence in the C-terminal section; belongs to the pectinesterase family. In terms of assembly, interacts with SBT6.1. In terms of tissue distribution, expressed in siliques.

Its subcellular location is the secreted. The protein localises to the cell wall. It is found in the golgi apparatus membrane. It catalyses the reaction [(1-&gt;4)-alpha-D-galacturonosyl methyl ester](n) + n H2O = [(1-&gt;4)-alpha-D-galacturonosyl](n) + n methanol + n H(+). It functions in the pathway glycan metabolism; pectin degradation; 2-dehydro-3-deoxy-D-gluconate from pectin: step 1/5. Its function is as follows. Acts in the modification of cell walls via demethylesterification of cell wall pectin. Demethylates protein phosphatase 2A (PP2A) that have been reversibly carboxymethylated by LCMT1. Acts as a negative regulators of genes involved in salt stress response. In Arabidopsis thaliana (Mouse-ear cress), this protein is Pectinesterase 1 (PME1).